The primary structure comprises 198 residues: MTNADNELEPRLITETGLDQRLADIIEPVLVGMGFRLIRVRMLNQNGMTMQVMAERNDGTMTVQDCEEVSMAISPVLDVEDPIDKEYHLEVSSPGIDRPMVRKSDFVRWQGHLVKCETSIMIGNRKRFRGKIVEADADGFTLERDQIAYGEEPKVSIPFTALSDAKLILTDDLIRDALRADKLAKAQAANQNEADEQE.

Belongs to the RimP family.

It localises to the cytoplasm. Functionally, required for maturation of 30S ribosomal subunits. This chain is Ribosome maturation factor RimP, found in Rhizobium etli (strain CIAT 652).